The sequence spans 137 residues: Small ribosomal subunit protein uS12 (137 aa).

Residues 1 to 55 (MPTINQLVRKPRKSKTKQSDSPALNRGFNSKKKQFTNLNSPQKRGVCTRVGTMTP) are disordered. At Asp-102 the chain carries 3-methylthioaspartic acid. Positions 118–137 (SGVDGRRQGRSLYGTKKPKN) are disordered.

It belongs to the universal ribosomal protein uS12 family. As to quaternary structure, part of the 30S ribosomal subunit. Contacts proteins S8 and S17. May interact with IF1 in the 30S initiation complex.

Functionally, with S4 and S5 plays an important role in translational accuracy. Its function is as follows. Interacts with and stabilizes bases of the 16S rRNA that are involved in tRNA selection in the A site and with the mRNA backbone. Located at the interface of the 30S and 50S subunits, it traverses the body of the 30S subunit contacting proteins on the other side and probably holding the rRNA structure together. The combined cluster of proteins S8, S12 and S17 appears to hold together the shoulder and platform of the 30S subunit. The chain is Small ribosomal subunit protein uS12 from Staphylococcus epidermidis (strain ATCC 35984 / DSM 28319 / BCRC 17069 / CCUG 31568 / BM 3577 / RP62A).